Consider the following 292-residue polypeptide: MPSLKDLRNRIASVKATQKITKAMQMVAAAKLRRAQEAAEAARPYSQRMGAVLANIAQNVSGEDAPALMVGTGKDNVHLLVVCTAERGLCGGFNSQIARLARDHARKLLAEGKTVKIITVGKKGADILRREFSALLHDHVDLREVKQLAFVHADQIGHKIIKLFEEGAFDVCTLFYSEFKSVISQVPTAQQLIPASADNEAEMETAGDAIYEYEPDPAAILSTLIPRNISVQIFRALLENVAGEMGAKMSAMDNATRNAGDMINKLSITYNRQRQAQITKELIEIISGAEAL.

It belongs to the ATPase gamma chain family. F-type ATPases have 2 components, CF(1) - the catalytic core - and CF(0) - the membrane proton channel. CF(1) has five subunits: alpha(3), beta(3), gamma(1), delta(1), epsilon(1). CF(0) has three main subunits: a, b and c.

Its subcellular location is the cell inner membrane. Produces ATP from ADP in the presence of a proton gradient across the membrane. The gamma chain is believed to be important in regulating ATPase activity and the flow of protons through the CF(0) complex. In Brucella canis (strain ATCC 23365 / NCTC 10854 / RM-666), this protein is ATP synthase gamma chain.